We begin with the raw amino-acid sequence, 544 residues long: GDP-mannose 4,6-dehydratase sdnI (544 aa).

Residues 16–21 (GITGQD), Arg41, 64–65 (DM), and 86–90 (LAAQS) contribute to the NADP(+) site. Ser90 provides a ligand contact to substrate. Active-site nucleophile residues include Glu135 and Tyr157. Tyr157 serves as a coordination point for substrate. Lys161 provides a ligand contact to NADP(+). Substrate is bound at residue Asn186. Positions 187 and 192 each coordinate NADP(+). Residues 192 to 200 (RGTTFVTRK), Gly219, Arg225, and 303 to 306 (RPVE) each bind substrate. A disordered region spans residues 366 to 406 (GETTSAVNSSPSSTAGDTYKASDGWSTSGAEGSEQTECSSV). Composition is skewed to polar residues over residues 368-381 (TTSA…STAG) and 389-404 (GWST…TECS).

Belongs to the NAD(P)-dependent epimerase/dehydratase family. GDP-mannose 4,6-dehydratase subfamily. The cofactor is NADP(+).

The enzyme catalyses GDP-alpha-D-mannose = GDP-4-dehydro-alpha-D-rhamnose + H2O. The protein operates within antibiotic biosynthesis. In terms of biological role, GDP-mannose 4,6-dehydratase; part of the gene cluster that mediates the biosynthesis of sordarin and hypoxysordarin, glycoside antibiotics with a unique tetracyclic diterpene aglycone structure. First, the geranylgeranyl diphosphate synthase sdnC constructs GGDP from farnesyl diphosphate and isopentenyl diphosphate. The diterpene cyclase sdnA then catalyzes the cyclization of GGDP to afford cycloaraneosene. Cycloaraneosene is then hydroxylated four times by the putative cytochrome P450 monooxygenases sdnB, sdnE, sdnF and sdnH to give a hydroxylated cycloaraneosene derivative such as cycloaraneosene-8,9,13,19-tetraol. Although the order of the hydroxylations is unclear, at least C8, C9 and C13 of the cycloaraneosene skeleton are hydroxylated before the sordaricin formation. Dehydration of the 13-hydroxy group of the hydroxylated cycloaraneosene derivative might be catalyzed by an unassigned hypothetical protein such as sdnG and sdnP to construct the cyclopentadiene moiety. The FAD-dependent oxidoreductase sdnN is proposed to catalyze the oxidation at C9 of the hydroxylated cycloaraneosene derivative and also catalyze the Baeyer-Villiger oxidation to give the lactone intermediate. The presumed lactone intermediate would be hydrolyzed to give an acrolein moiety and a carboxylate moiety. Then, [4+2]cycloaddition would occur between the acrolein moiety and the cyclopentadiene moiety to give sordaricin. SdnN might also be involved in the [4+2]cycloaddition after the hypothesized oxidation to accommodate the oxidized product and prompt the [4+2]cycloaddition. GDP-6-deoxy-D-altrose may be biosynthesized from GDP-D-mannose by the putative GDP-mannose-4,6-dehydratase sdnI and the short-chain dehydrogenase sdnK. The glycosyltransferase sdnJ catalyzes the attachment of 6-deoxy-D-altrose onto the 19-hydroxy group of sordaricin to give 4'-O-demethylsordarin. The methyltransferase sdnD would complete the biosynthesis of sordarin. Sordarin can be further modified into hypoxysordarin. The unique acyl chain at the 3'-hydroxy group of hypoxysordarin would be constructed by an iterative type I PKS sdnO and the trans-acting polyketide methyltransferase sdnL. SdnL would be responsible for the introduction of an alpha-methyl group of the polyketide chain. Alternatively, the beta-lactamase-like protein sdnR might be responsible for the cleavage and transfer of the polyketide chain from the PKS sdnO to sordarin. Two putative cytochrome P450 monooxygenases, sdnQ and sdnT, might catalyze the epoxidations of the polyketide chain to complete the biosynthesis of hypoxysordarin. Transcriptional regulators sdnM and sdnS are presumably encoded for the transcriptional regulation of the expression of the sdn gene cluster. The polypeptide is GDP-mannose 4,6-dehydratase sdnI (Sordaria araneosa (Pleurage araneosa)).